Consider the following 652-residue polypeptide: Engulfment and cell motility protein 3 (652 aa).

In terms of domain architecture, ELMO spans 307–479 (EQREQLQALR…VVREQLARTL (173 aa)).

As to quaternary structure, probably interacts directly with the SH3-domain of DOCK1 via its SH3-binding site. Part of a complex with DOCK1 and RAC1. Interacts with ADGRB3.

The protein localises to the cytoplasm. Involved in cytoskeletal rearrangements required for phagocytosis of apoptotic cells and cell motility. Acts in association with DOCK1 and CRK. Was initially proposed to be required in complex with DOCK1 to activate Rac Rho small GTPases. May enhance the guanine nucleotide exchange factor (GEF) activity of DOCK1. The polypeptide is Engulfment and cell motility protein 3 (ELMO3) (Bos taurus (Bovine)).